Consider the following 168-residue polypeptide: Plastocyanin A, chloroplastic (168 aa).

A chloroplast-targeting transit peptide spans 1-69 (MATVTSAAVS…SAMIASNAMA (69 aa)). A Plastocyanin-like domain is found at 70-168 (IDVLLGADDG…AGMVGKVTVN (99 aa)). Cu cation contacts are provided by histidine 106, cysteine 153, histidine 156, and methionine 161.

This sequence belongs to the plastocyanin family. Cu(2+) serves as cofactor.

The protein localises to the plastid. Its subcellular location is the chloroplast thylakoid membrane. Participates in electron transfer between P700 and the cytochrome b6-f complex in photosystem I. This is Plastocyanin A, chloroplastic (PETE) from Populus nigra (Lombardy poplar).